The primary structure comprises 256 residues: Thiazole synthase (256 aa).

The Schiff-base intermediate with DXP role is filled by K96. Residues G157, 183-184, and 205-206 contribute to the 1-deoxy-D-xylulose 5-phosphate site; these read AG and NT.

It belongs to the ThiG family. In terms of assembly, homotetramer. Forms heterodimers with either ThiH or ThiS.

Its subcellular location is the cytoplasm. It carries out the reaction [ThiS sulfur-carrier protein]-C-terminal-Gly-aminoethanethioate + 2-iminoacetate + 1-deoxy-D-xylulose 5-phosphate = [ThiS sulfur-carrier protein]-C-terminal Gly-Gly + 2-[(2R,5Z)-2-carboxy-4-methylthiazol-5(2H)-ylidene]ethyl phosphate + 2 H2O + H(+). The protein operates within cofactor biosynthesis; thiamine diphosphate biosynthesis. Catalyzes the rearrangement of 1-deoxy-D-xylulose 5-phosphate (DXP) to produce the thiazole phosphate moiety of thiamine. Sulfur is provided by the thiocarboxylate moiety of the carrier protein ThiS. In vitro, sulfur can be provided by H(2)S. This Bacillus cereus (strain AH187) protein is Thiazole synthase.